Here is a 389-residue protein sequence, read N- to C-terminus: Aspartyl protease UND (389 aa).

Positions 1–19 (MKTTMNFVFLFFLPLLINA) are cleaved as a signal peptide. In terms of domain architecture, Peptidase A1 spans 58 to 383 (FMAEIHFGSP…DLSAKTAYIN (326 aa)). The active site involves D76. C86 and C92 are joined by a disulfide. N238 carries N-linked (GlcNAc...) asparagine glycosylation. The active site involves D268. C304 and C346 form a disulfide bridge.

This sequence belongs to the peptidase A1 family.

Probable aspartic protease activated by the transcription factor MYB80. May participate in the regulation of the timing of tapetal programmed cell death (PCD) which is critical for pollen development. The polypeptide is Aspartyl protease UND (Arabidopsis thaliana (Mouse-ear cress)).